The sequence spans 851 residues: Alanine--tRNA ligase (851 aa).

Zn(2+)-binding residues include H535, H539, C637, and H641.

Belongs to the class-II aminoacyl-tRNA synthetase family. Zn(2+) serves as cofactor.

The protein localises to the cytoplasm. It catalyses the reaction tRNA(Ala) + L-alanine + ATP = L-alanyl-tRNA(Ala) + AMP + diphosphate. Functionally, catalyzes the attachment of alanine to tRNA(Ala) in a two-step reaction: alanine is first activated by ATP to form Ala-AMP and then transferred to the acceptor end of tRNA(Ala). Also edits incorrectly charged Ser-tRNA(Ala) and Gly-tRNA(Ala) via its editing domain. The protein is Alanine--tRNA ligase of Acholeplasma laidlawii (strain PG-8A).